Reading from the N-terminus, the 82-residue chain is Delta-conotoxin-like CnVIA (82 aa).

The N-terminal stretch at 1-22 (MKLTCMMIVAVLFLTAWTFVTA) is a signal peptide. Residues 23 to 49 (DDSRNGLENLSPKARHEMKNPEASKSN) constitute a propeptide that is removed on maturation. Intrachain disulfides connect Cys-54–Cys-69, Cys-61–Cys-73, and Cys-68–Cys-78.

Belongs to the conotoxin O1 superfamily. As to expression, expressed by the venom duct.

The protein localises to the secreted. Its function is as follows. Delta-conotoxins bind to site 6 of voltage-gated sodium channels (Nav) and inhibit the inactivation process. The polypeptide is Delta-conotoxin-like CnVIA (Conus consors (Singed cone)).